A 177-amino-acid chain; its full sequence is Large ribosomal subunit protein uL6 (177 aa).

It belongs to the universal ribosomal protein uL6 family. Part of the 50S ribosomal subunit.

Functionally, this protein binds to the 23S rRNA, and is important in its secondary structure. It is located near the subunit interface in the base of the L7/L12 stalk, and near the tRNA binding site of the peptidyltransferase center. In Yersinia pseudotuberculosis serotype O:1b (strain IP 31758), this protein is Large ribosomal subunit protein uL6.